Reading from the N-terminus, the 690-residue chain is Elongation factor G (690 aa).

Positions 8 to 283 (DKYRNIGIMA…AVVDFLPSPL (276 aa)) constitute a tr-type G domain. GTP is bound by residues 17–24 (AHIDAGKT), 81–85 (DTPGH), and 135–138 (NKLD).

Belongs to the TRAFAC class translation factor GTPase superfamily. Classic translation factor GTPase family. EF-G/EF-2 subfamily.

The protein localises to the cytoplasm. In terms of biological role, catalyzes the GTP-dependent ribosomal translocation step during translation elongation. During this step, the ribosome changes from the pre-translocational (PRE) to the post-translocational (POST) state as the newly formed A-site-bound peptidyl-tRNA and P-site-bound deacylated tRNA move to the P and E sites, respectively. Catalyzes the coordinated movement of the two tRNA molecules, the mRNA and conformational changes in the ribosome. This Zymomonas mobilis subsp. mobilis (strain ATCC 31821 / ZM4 / CP4) protein is Elongation factor G.